Reading from the N-terminus, the 150-residue chain is Cell division protein SepF (150 aa).

This sequence belongs to the SepF family. As to quaternary structure, homodimer. Interacts with FtsZ.

It localises to the cytoplasm. Cell division protein that is part of the divisome complex and is recruited early to the Z-ring. Probably stimulates Z-ring formation, perhaps through the cross-linking of FtsZ protofilaments. Its function overlaps with FtsA. This chain is Cell division protein SepF, found in Clostridium kluyveri (strain NBRC 12016).